Here is a 174-residue protein sequence, read N- to C-terminus: Ribosome maturation factor RimM (174 aa).

The PRC barrel domain occupies 98–171 (EDEFYFHEII…KIKIHVMEGL (74 aa)).

This sequence belongs to the RimM family. As to quaternary structure, binds ribosomal protein uS19.

The protein resides in the cytoplasm. Functionally, an accessory protein needed during the final step in the assembly of 30S ribosomal subunit, possibly for assembly of the head region. Essential for efficient processing of 16S rRNA. May be needed both before and after RbfA during the maturation of 16S rRNA. It has affinity for free ribosomal 30S subunits but not for 70S ribosomes. This chain is Ribosome maturation factor RimM, found in Bacillus velezensis (strain DSM 23117 / BGSC 10A6 / LMG 26770 / FZB42) (Bacillus amyloliquefaciens subsp. plantarum).